Here is a 547-residue protein sequence, read N- to C-terminus: Chaperonin GroEL (547 aa).

ATP contacts are provided by residues 30-33, K51, 87-91, G415, and D495; these read TLGP and DGTTT.

This sequence belongs to the chaperonin (HSP60) family. In terms of assembly, forms a cylinder of 14 subunits composed of two heptameric rings stacked back-to-back. Interacts with the co-chaperonin GroES.

The protein localises to the cytoplasm. The enzyme catalyses ATP + H2O + a folded polypeptide = ADP + phosphate + an unfolded polypeptide.. Its function is as follows. Together with its co-chaperonin GroES, plays an essential role in assisting protein folding. The GroEL-GroES system forms a nano-cage that allows encapsulation of the non-native substrate proteins and provides a physical environment optimized to promote and accelerate protein folding. In Allorhizobium ampelinum (strain ATCC BAA-846 / DSM 112012 / S4) (Agrobacterium vitis (strain S4)), this protein is Chaperonin GroEL.